We begin with the raw amino-acid sequence, 468 residues long: Tyrosine phenol-lyase (468 aa).

N6-(pyridoxal phosphate)lysine is present on lysine 260.

This sequence belongs to the beta-eliminating lyase family. As to quaternary structure, homotetramer. Pyridoxal 5'-phosphate serves as cofactor.

It carries out the reaction L-tyrosine + H2O = phenol + pyruvate + NH4(+). The polypeptide is Tyrosine phenol-lyase (Lacrimispora saccharolytica (strain ATCC 35040 / DSM 2544 / NRCC 2533 / WM1) (Clostridium saccharolyticum)).